Reading from the N-terminus, the 342-residue chain is Methylthioribose-1-phosphate isomerase (342 aa).

Substrate contacts are provided by residues 49 to 51, R86, and Q187; that span reads RGA. D228 (proton donor) is an active-site residue. 238 to 239 provides a ligand contact to substrate; sequence NK.

Belongs to the eIF-2B alpha/beta/delta subunits family. MtnA subfamily.

It catalyses the reaction 5-(methylsulfanyl)-alpha-D-ribose 1-phosphate = 5-(methylsulfanyl)-D-ribulose 1-phosphate. The protein operates within amino-acid biosynthesis; L-methionine biosynthesis via salvage pathway; L-methionine from S-methyl-5-thio-alpha-D-ribose 1-phosphate: step 1/6. Its function is as follows. Catalyzes the interconversion of methylthioribose-1-phosphate (MTR-1-P) into methylthioribulose-1-phosphate (MTRu-1-P). This Serratia proteamaculans (strain 568) protein is Methylthioribose-1-phosphate isomerase.